Here is an 88-residue protein sequence, read N- to C-terminus: Protein K3 (88 aa).

An S1 motif domain is found at 8–82; the sequence is LPNAGDVIKG…TKGYIDVNYK (75 aa). Binding to host EIF2AK2/PKR stretches follow at residues 43-53 and 74-79; these read SVKMHMDRYVE and KGYIDV.

It belongs to the orthopoxvirus OPG041 family. As to quaternary structure, interacts with host EIF2AK2/PKR kinase.

Viral mimic of eIF-2-alpha that acts as a pseudosubstrate for EIF2AK2/PKR kinase. Inhibits therefore eIF-2-alpha phosphorylation by host EIF2AK2/PKR kinase and prevents protein synthesis shutoff. Determinant of host species specificity. This is Protein K3 (OPG041) from Homo sapiens (Human).